A 417-amino-acid polypeptide reads, in one-letter code: Phosphoglycerate kinase 1 (417 aa).

Positions 23, 24, 25, 26, 38, 39, 62, 63, 65, 66, 121, 122, 168, and 169 each coordinate (2R)-3-phosphoglycerate. Gly-212 contributes to the ADP binding site. A CDP-binding site is contributed by Gly-212. Residues Ala-213 and Lys-214 each coordinate AMP. Ala-213 provides a ligand contact to ATP. Ala-213 is a binding site for Mg(2+). Asp-217 contributes to the CDP binding site. Residue Asp-217 coordinates Mg(2+). Residue Lys-218 participates in AMP binding. Lys-218 is a binding site for ATP. Gly-236 lines the ADP pocket. Position 236 (Gly-236) interacts with CDP. Gly-237 and Gly-311 together coordinate AMP. ATP is bound by residues Gly-237 and Gly-311. Gly-336 and Phe-341 together coordinate CDP. An ADP-binding site is contributed by Phe-341. Glu-342 is a binding site for AMP. Positions 342, 374, and 375 each coordinate ATP. A Mg(2+)-binding site is contributed by Asp-374.

The protein belongs to the phosphoglycerate kinase family. In terms of assembly, monomer. Mg(2+) serves as cofactor.

The protein localises to the cytoplasm. It is found in the mitochondrion. The enzyme catalyses (2R)-3-phosphoglycerate + ATP = (2R)-3-phospho-glyceroyl phosphate + ADP. Its pathway is carbohydrate degradation; glycolysis; pyruvate from D-glyceraldehyde 3-phosphate: step 2/5. Catalyzes one of the two ATP producing reactions in the glycolytic pathway via the reversible conversion of 1,3-diphosphoglycerate to 3-phosphoglycerate. Both L- and D- forms of purine and pyrimidine nucleotides can be used as substrates, but the activity is much lower on pyrimidines. Negatively regulates the biosynthesis of acetyl-CoA from pyruvate in the mitochondrion. The protein is Phosphoglycerate kinase 1 (PGK1) of Rhizopus niveus.